Reading from the N-terminus, the 495-residue chain is Membrane-bound lytic murein transglycosylase F (495 aa).

Residues 1–30 form the signal peptide; the sequence is MSRIRHHRFIQSCLVISTLLITLTGCQVES. A non-LT domain region spans residues 31 to 270; it reads EPKTKLEQIR…LLEEKYFGHV (240 aa). Positions 272 to 495 are LT domain; it reads SFDYVDTRAF…SVSQAIETKK (224 aa). The active site involves Glu315.

In the N-terminal section; belongs to the bacterial solute-binding protein 3 family. This sequence in the C-terminal section; belongs to the transglycosylase Slt family.

It localises to the cell outer membrane. The catalysed reaction is Exolytic cleavage of the (1-&gt;4)-beta-glycosidic linkage between N-acetylmuramic acid (MurNAc) and N-acetylglucosamine (GlcNAc) residues in peptidoglycan, from either the reducing or the non-reducing ends of the peptidoglycan chains, with concomitant formation of a 1,6-anhydrobond in the MurNAc residue.. In terms of biological role, murein-degrading enzyme that degrades murein glycan strands and insoluble, high-molecular weight murein sacculi, with the concomitant formation of a 1,6-anhydromuramoyl product. Lytic transglycosylases (LTs) play an integral role in the metabolism of the peptidoglycan (PG) sacculus. Their lytic action creates space within the PG sacculus to allow for its expansion as well as for the insertion of various structures such as secretion systems and flagella. The polypeptide is Membrane-bound lytic murein transglycosylase F (Aliivibrio fischeri (strain ATCC 700601 / ES114) (Vibrio fischeri)).